We begin with the raw amino-acid sequence, 255 residues long: Large ribosomal subunit protein uL2 (255 aa).

The interval 211 to 235 (PHGGGNHQHVGHATTTKRDDPAGKK) is disordered.

This sequence belongs to the universal ribosomal protein uL2 family.

The sequence is that of Large ribosomal subunit protein uL2 (rpl8) from Dictyostelium discoideum (Social amoeba).